Reading from the N-terminus, the 207-residue chain is UPF0126 inner membrane protein YadS (207 aa).

A helical transmembrane segment spans residues 1–21; that stretch reads MLVYWLDIVGTAVFAISGVLL. The Cytoplasmic segment spans residues 22–29; that stretch reads AGKLRMDP. A helical membrane pass occupies residues 30–50; the sequence is FGVLVLGVVTAVGGGTIRDMA. The Periplasmic segment spans residues 51-58; sequence LDHGPVFW. Residues 59–79 form a helical membrane-spanning segment; it reads VKDPTDLVVAMVTSMLTIVLV. The Cytoplasmic portion of the chain corresponds to 80 to 85; the sequence is RQPRRL. The chain crosses the membrane as a helical span at residues 86-106; it reads PKWMLPVLDAVGLAVFVGIGV. The Periplasmic portion of the chain corresponds to 107–112; that stretch reads NKAFNA. The chain crosses the membrane as a helical span at residues 113–133; the sequence is EAGPLIAVCMGVITGVGGGII. Topologically, residues 134–148 are cytoplasmic; sequence RDVLAREIPMILRTE. The helical transmembrane segment at 149–169 threads the bilayer; it reads IYATACIIGGIVHATAYYTFS. A topological domain (periplasmic) is located at residue valine 170. Residues 171–191 traverse the membrane as a helical segment; sequence PLETASMMGMVVTLLIRLAAI. At 192 to 207 the chain is on the cytoplasmic side; sequence RWHLKLPTFALDENGR.

Belongs to the UPF0126 family.

It is found in the cell inner membrane. The sequence is that of UPF0126 inner membrane protein YadS (yadS) from Escherichia coli O6:H1 (strain CFT073 / ATCC 700928 / UPEC).